A 78-amino-acid polypeptide reads, in one-letter code: Large ribosomal subunit protein bL28 (78 aa).

Belongs to the bacterial ribosomal protein bL28 family.

The chain is Large ribosomal subunit protein bL28 from Flavobacterium johnsoniae (strain ATCC 17061 / DSM 2064 / JCM 8514 / BCRC 14874 / CCUG 350202 / NBRC 14942 / NCIMB 11054 / UW101) (Cytophaga johnsonae).